The chain runs to 346 residues: fMet-Leu-Phe receptor (346 aa).

N-linked (GlcNAc...) asparagine glycans are attached at residues asparagine 1 and asparagine 7. At 1–24 the chain is on the extracellular side; it reads NSSLPTNISGGTPAVSAGYLFLDI. A helical transmembrane segment spans residues 25–47; that stretch reads VTYLVFAVTFVLGVLGNGLVIWV. At 48–58 the chain is on the cytoplasmic side; the sequence is AGFRMTHTVTT. A helical membrane pass occupies residues 59–80; the sequence is ISYLNLAVADFCFTSTLPFFMV. At 81–97 the chain is on the extracellular side; it reads KKAMGGHWPFGWFLCKF. Cysteine 95 and cysteine 173 are oxidised to a cystine. The helical transmembrane segment at 98–118 threads the bilayer; the sequence is IFTIVDINLFGSVFLIALIAL. Residues 119–137 are Cytoplasmic-facing; the sequence is DRCVCVLHPVWTQNHRTVS. A helical transmembrane segment spans residues 138–159; that stretch reads LAKKVIIGPWVMALLLTLPVII. Over 160 to 202 the chain is Extracellular; it reads RVTTVPGKMGTVACTFNFSPWTNDPKERIKVAVAMLTVRGIIR. Residues 203–223 form a helical membrane-spanning segment; the sequence is FIIGFSAPMSIVAVSYGLIAT. Residues 224–239 are Cytoplasmic-facing; that stretch reads KIDKQGLIKSSRTLRV. A helical membrane pass occupies residues 240-263; the sequence is LSFVAAAFFLSWSPYQVVALIATV. At 264–282 the chain is on the extracellular side; sequence RIRELLQGMYKEIGIAVDV. Residues 283 to 302 form a helical membrane-spanning segment; that stretch reads TSALAFFNSCLNPMLYVFMG. The Cytoplasmic portion of the chain corresponds to 303-346; sequence QDFRERLIHALPASLERALTEDSTQTSDTATNSTLPSAEVALQA. Residues 322 to 346 form a disordered region; sequence TEDSTQTSDTATNSTLPSAEVALQA. Residues 323–338 are compositionally biased toward polar residues; it reads EDSTQTSDTATNSTLP.

This sequence belongs to the G-protein coupled receptor 1 family. Post-translationally, phosphorylated; which is necessary for desensitization.

The protein resides in the cell membrane. Its function is as follows. High affinity receptor for N-formyl-methionyl peptides (fMLP), which are powerful neutrophil chemotactic factors. Binding of fMLP to the receptor stimulates intracellular calcium mobilization and superoxide anion release. This response is mediated via a G-protein that activates a phosphatidylinositol-calcium second messenger system. Receptor for TAFA4, mediates its effects on chemoattracting macrophages, promoting phagocytosis and increasing ROS release. Receptor for cathepsin CTSG, leading to increased phagocyte chemotaxis. The polypeptide is fMet-Leu-Phe receptor (FPR1) (Gorilla gorilla gorilla (Western lowland gorilla)).